Here is a 508-residue protein sequence, read N- to C-terminus: Probable ATP-dependent RNA helicase ddx49 (508 aa).

The Q motif motif lies at 4–32 (KTFEELGLTTWLVANCKQLGFKAPSNIQA). The Helicase ATP-binding domain occupies 35–208 (IPEILKGRDI…SIALNKPFIF (174 aa)). Residue 48 to 55 (AKTGSGKT) coordinates ATP. The DEAD box motif lies at 154-157 (DEAD). In terms of domain architecture, Helicase C-terminal spans 219–379 (TLKQEYIYMP…LYKTDDDEVF (161 aa)). The tract at residues 422-476 (VNNKEKFENNNNDNNNNNKTKTTKPENKKEITKIQEQPSKSTTTTKSIEKKPTTI) is disordered. A compositionally biased stretch (low complexity) spans 430-441 (NNNNDNNNNNKT). Basic and acidic residues predominate over residues 444–454 (TKPENKKEITK).

It belongs to the DEAD box helicase family. DDX49/DBP8 subfamily.

It carries out the reaction ATP + H2O = ADP + phosphate + H(+). In terms of biological role, probable ATP-binding RNA helicase. The polypeptide is Probable ATP-dependent RNA helicase ddx49 (ddx49) (Dictyostelium discoideum (Social amoeba)).